A 252-amino-acid polypeptide reads, in one-letter code: CLAVATA3/ESR (CLE)-related protein 4A-1 (252 aa).

The N-terminal stretch at 1–21 is a signal peptide; sequence MAKNAMLCLLILRVVLALAFA. The interval 21–83 is required for secretion from the host cytoplasm to the host apoplasm; that stretch reads ATNKKGDEEP…SNQLPNNNWM (63 aa). Asn-32 is a glycosylation site (N-linked (GlcNAc...) asparagine). The disordered stretch occupies residues 116–252; it reads RKTGMHSQRH…APAGPDPIHH (137 aa). 2 stretches are compositionally biased toward basic and acidic residues: residues 125-137 and 144-242; these read HHEETTLEQEKRV and PIHH…EKRG. Residues 127 to 135 form an A-1 repeat; sequence EETTLEQEK. Positions 127 to 219 are 6 X approximate repeat A; it reads EETTLEQEKR…HEETTLEQEK (93 aa). Residues 136–147 form a CLE-1 repeat; the sequence is RVAGAGPDPIHH. Residues 136–252 form a 6 X approximate repeat CLE region; that stretch reads RVAGAGPDPI…APAGPDPIHH (117 aa). The stretch at 148 to 156 is one A-2 repeat; it reads QDTTLEQEK. The CLE-2 repeat unit spans residues 157-168; it reads RAVPAGPDPKHH. One copy of the A-3 repeat lies at 169-177; the sequence is EETTLEQEK. A CLE-3 repeat occupies 178 to 189; that stretch reads RAVPAGPDPKHH. Residues 190–198 form an A-4 repeat; it reads EETTLEQEK. A CLE-4 repeat occupies 199–210; sequence RAVPAGPDPKHH. Residues 211-219 form an A-5 repeat; sequence EETTLEQEK. Residues 220–231 form a CLE-5 repeat; the sequence is RAVPAGPDPKHH. An A-6 repeat occupies 232-240; it reads EETTFEQEK. One copy of the CLE-6 repeat lies at 241-252; that stretch reads RGAPAGPDPIHH.

The protein belongs to the CLV3/ESR signal peptide family. Highly expressed exclusively within the dorsal esophageal gland cell during syncytium formation in host plants.

It is found in the secreted. Its subcellular location is the host cytoplasm. It localises to the host extracellular space. The protein resides in the extracellular space. The protein localises to the apoplast. Mimics host plant CLE extracellular signal peptides that regulate cell fate. May play a role in the differentiation or division of feeding cells (syncytia) induced in plant roots during infection. This is CLAVATA3/ESR (CLE)-related protein 4A-1 (CLE-4A-1) from Globodera rostochiensis (Golden nematode worm).